Reading from the N-terminus, the 315-residue chain is Eukaryotic translation initiation factor 2 subunit 1 (315 aa).

Residues 17-88 (EDVVMVNVRS…EKGYIDLSKR (72 aa)) enclose the S1 motif domain. Residue S49 is modified to Phosphoserine; by HRI. Position 52 is a phosphoserine (S52). K141 carries the N6-acetyllysine modification. The residue at position 158 (S158) is a Phosphoserine. A phosphothreonine mark is found at T279 and T281. The interval 292-315 (RLERENAEVDGDDDAEEMEAKAED) is disordered. The segment covering 299 to 308 (EVDGDDDAEE) has biased composition (acidic residues).

This sequence belongs to the eIF-2-alpha family. As to quaternary structure, eukaryotic translation initiation factor 2 eIF2 is a heterotrimeric complex composed of an alpha (EIF2S1), a beta (EIF2S2) and a gamma (EIF2S3) chain. eIF2 is member of the 43S pre-initiation complex (43S PIC). eIF2 forms a complex with at least CELF1/CUGBP1, CALR, CALR3, EIF2S1, EIF2S2, HSP90B1 and HSPA5. Interaction with METAP2 protects EIF2S1 from inhibitory phosphorylation. Interacts with ABCF1. Associates with ribosomes. Interacts with DDX3X in an RNA-independent manner. Phosphorylation at Ser-49 and Ser-52 stabilizes the eIF-2/GDP/eIF2B complex and prevents GDP/GTP exchange reaction, thus impairing the recycling of eIF-2 between successive rounds of initiation and leading to global inhibition of translation, while concomitantly initiating the preferential translation of integrated stress response (ISR)-specific mRNAs. Substrate for at least 4 kinases: EIF2AK1/HRI, EIF2AK2/PKR, EIF2AK3/PERK and EIF2AK4/GCN2. Phosphorylation at Ser-52 by the EIF2AK3/PERK protein kinase occurs in response to the unfolded protein response. Phosphorylation on Ser-52 by the EIF2AK4/GCN2 protein kinase occurs in response to amino acid starvation and UV irradiation. Phosphorylation at Ser-52 by EIF2AK1/HRI in response to mitochondrial damage promotes relocalization to the mitochondrial surface.

The protein localises to the cytoplasm. It localises to the stress granule. It is found in the cytosol. Its subcellular location is the mitochondrion. With respect to regulation, activity is regulated by phosphorylation at Ser-49 and Ser-52, which stabilizes the eIF2/GDP/eIF2B complex and prevents the eIF2B-mediated exchange of GDP for GTP, thereby preventing the formation of the 43S pre-initiation complex (43S PIC). This results in the global attenuation of 5' cap-dependent protein synthesis and concomitant translation of ISR-specific mRNAs that contain a short upstream open reading frame (uORF) in their 5' UTR, such as ATF4, ATF5, DDIT3/CHOP and PPP1R15A/GADD34. Functionally, member of the eIF2 complex that functions in the early steps of protein synthesis by forming a ternary complex with GTP and initiator tRNA. This complex binds to a 40S ribosomal subunit, followed by mRNA binding to form a 43S pre-initiation complex. Junction of the 60S ribosomal subunit to form the 80S initiation complex is preceded by hydrolysis of the GTP bound to eIF2 and release of an eIF2-GDP binary complex. In order for eIF2 to recycle and catalyze another round of initiation, the GDP bound to eIF2 must exchange with GTP by way of a reaction catalyzed by eIF2B. EIF2S1/eIF2-alpha is a key component of the integrated stress response (ISR), required for adaptation to various stress: phosphorylation by metabolic-stress sensing protein kinases (EIF2AK1/HRI, EIF2AK2/PKR, EIF2AK3/PERK and EIF2AK4/GCN2) in response to stress converts EIF2S1/eIF2-alpha in a global protein synthesis inhibitor, leading to a attenuation of cap-dependent translation, while concomitantly initiating the preferential translation of ISR-specific mRNAs, such as the transcriptional activators ATF4 and QRICH1, and hence allowing ATF4- and QRICH1-mediated reprogramming. EIF2S1/eIF2-alpha also acts as an activator of mitophagy in response to mitochondrial damage: phosphorylation by EIF2AK1/HRI promotes relocalization to the mitochondrial surface, thereby triggering PRKN-independent mitophagy. The chain is Eukaryotic translation initiation factor 2 subunit 1 (EIF2S1) from Sus scrofa (Pig).